Here is a 102-residue protein sequence, read N- to C-terminus: Urease subunit beta (102 aa).

The protein belongs to the urease beta subunit family. Heterotrimer of UreA (gamma), UreB (beta) and UreC (alpha) subunits. Three heterotrimers associate to form the active enzyme.

It is found in the cytoplasm. The enzyme catalyses urea + 2 H2O + H(+) = hydrogencarbonate + 2 NH4(+). Its pathway is nitrogen metabolism; urea degradation; CO(2) and NH(3) from urea (urease route): step 1/1. The protein is Urease subunit beta of Trichodesmium erythraeum (strain IMS101).